A 2193-amino-acid polypeptide reads, in one-letter code: Protein sidekick-1 (2193 aa).

Residues 1–23 are compositionally biased toward low complexity; the sequence is MARARPSVAGGGVAAPPERAGPG. A disordered region spans residues 1-56; it reads MARARPSVAGGGVAAPPERAGPGRPRRSRTGHHCDPECPGLRAAPRTPGPGAGRRA. 5 Ig-like C2-type domains span residues 86–168, 173–259, 275–363, 368–458, and 462–551; these read PYFK…SEIQ, GNFM…SPFI, PIIV…AFLS, PYFT…LDVT, and PAFT…AMLT. Cysteines 108 and 151 form a disulfide. N-linked (GlcNAc...) asparagine glycans are attached at residues Asn-123, Asn-253, and Asn-283. 3 cysteine pairs are disulfide-bonded: Cys-297/Cys-344, Cys-390/Cys-440, and Cys-483/Cys-535. N-linked (GlcNAc...) asparagine glycosylation is found at Asn-532, Asn-545, and Asn-554. Positions 556–645 constitute an Ig-like C2-type 6 domain; it reads TSIVHPPEDR…GSDSRTARLE (90 aa). Cys-577 and Cys-629 are oxidised to a cystine. Fibronectin type-III domains are found at residues 652–748, 753–849, 854–952, 956–1050, 1054–1153, 1158–1256, 1261–1358, 1362–1456, 1461–1558, 1563–1681, 1686–1782, 1786–1881, and 1884–1982; these read PPQN…LPEE, PPKN…TLQG, PPQN…THED, AVGH…VPPD, APSN…TLQA, APTS…TRES, APEN…TKDD, PPVR…TEKR, PPRE…TLQD, PPGS…VGEA, APQN…THQA, PPSF…AGPA, and SPGS…SAQA. Residues Asn-764, Asn-803, Asn-864, Asn-997, and Asn-1006 are each glycosylated (N-linked (GlcNAc...) asparagine). N-linked (GlcNAc...) asparagine glycosylation is found at Asn-1264 and Asn-1315. 4 N-linked (GlcNAc...) asparagine glycosylation sites follow: Asn-1636, Asn-1730, Asn-1801, and Asn-1875. Residues 1992 to 2012 form a helical membrane-spanning segment; it reads FLLVMALSSLLLILLVVFVLV. The Cytoplasmic segment spans residues 2013-2193; that stretch reads LHGQSKKYKS…APLTGFSSFV (181 aa). The disordered stretch occupies residues 2057-2080; sequence STFSKKNGTRSPPRPSPGGLHYSD. The PDZ-binding signature appears at 2187–2193; sequence TGFSSFV.

This sequence belongs to the sidekick family. As to quaternary structure, homodimer; mediates homophilic interactions to promote cell adhesion. Interacts (via PDZ-binding motif) with MAGI1, MAGI2, DLG2, DLG3 and DLG4. Does not mediate homophilic interactions. As to expression, expressed by non-overlapping subsets of retinal neurons. Sdk1 and Sdk2 are expressed in non-overlapping subsets of interneurons and retinal ganglion cells (RGCs) that form synapses in distinct inner plexiform layer (IPL) sublaminae (at protein level).

It localises to the cell membrane. It is found in the synapse. Its function is as follows. Adhesion molecule that promotes lamina-specific synaptic connections in the retina. Expressed in specific subsets of interneurons and retinal ganglion cells (RGCs) and promotes synaptic connectivity via homophilic interactions. This Mus musculus (Mouse) protein is Protein sidekick-1.